The sequence spans 53 residues: Membrane antigen containing repeating peptides (53 aa).

6 tandem repeats follow at residues 1–10, 11–20, 21–30, 31–40, 41–50, and 51–53. The 6 X 10 AA tandem repeats stretch occupies residues 1 to 53; sequence EAEEAARLQAEAEEAARQQAEAEEAARLQAEAEEAARLQAEAEEAARLQAEAE. Residues 1–53 form a disordered region; the sequence is EAEEAARLQAEAEEAARQQAEAEEAARLQAEAEEAARLQAEAEEAARLQAEAE.

It is found in the membrane. In Leishmania major, this protein is Membrane antigen containing repeating peptides.